We begin with the raw amino-acid sequence, 398 residues long: S-adenosylmethionine synthase (398 aa).

136 to 141 (GTGSSD) serves as a coordination point for ATP.

The protein belongs to the AdoMet synthase 2 family. The cofactor is Mg(2+).

It catalyses the reaction L-methionine + ATP + H2O = S-adenosyl-L-methionine + phosphate + diphosphate. Its pathway is amino-acid biosynthesis; S-adenosyl-L-methionine biosynthesis; S-adenosyl-L-methionine from L-methionine: step 1/1. In terms of biological role, catalyzes the formation of S-adenosylmethionine from methionine and ATP. This chain is S-adenosylmethionine synthase, found in Methanosarcina mazei (strain ATCC BAA-159 / DSM 3647 / Goe1 / Go1 / JCM 11833 / OCM 88) (Methanosarcina frisia).